Consider the following 198-residue polypeptide: Probable septum site-determining protein MinC (198 aa).

This sequence belongs to the MinC family. Interacts with MinD and FtsZ.

Its function is as follows. Cell division inhibitor that blocks the formation of polar Z ring septums. Rapidly oscillates between the poles of the cell to destabilize FtsZ filaments that have formed before they mature into polar Z rings. Prevents FtsZ polymerization. The chain is Probable septum site-determining protein MinC from Thermosipho melanesiensis (strain DSM 12029 / CIP 104789 / BI429).